Here is a 459-residue protein sequence, read N- to C-terminus: Cysteine--tRNA ligase (459 aa).

Cys-31 provides a ligand contact to Zn(2+). A 'HIGH' region motif is present at residues 33 to 43 (PTVYYNPHIGN). Zn(2+) contacts are provided by Cys-216, His-241, and Glu-245. The 'KMSKS' region motif lies at 274–278 (KMSKS). Position 277 (Lys-277) interacts with ATP.

The protein belongs to the class-I aminoacyl-tRNA synthetase family. As to quaternary structure, monomer. It depends on Zn(2+) as a cofactor.

It localises to the cytoplasm. The enzyme catalyses tRNA(Cys) + L-cysteine + ATP = L-cysteinyl-tRNA(Cys) + AMP + diphosphate. This Rickettsia rickettsii (strain Iowa) protein is Cysteine--tRNA ligase.